Here is a 686-residue protein sequence, read N- to C-terminus: Tripartite terminase subunit 3 (686 aa).

A Walker A motif motif is present at residues 219-226; that stretch reads IPRRHGKT. Positions 314-319 match the Walker B motif motif; the sequence is LLYVDE. Glutamate 319 functions as the For ATPase activity in the catalytic mechanism. Residues aspartate 475, glutamate 548, and aspartate 660 each act as for nuclease activity in the active site.

It belongs to the herpesviridae TRM3 protein family. In terms of assembly, interacts with the terminase subunits TRM1 and TRM2. Interacts with portal protein.

It is found in the host nucleus. Functionally, component of the molecular motor that translocates viral genomic DNA in empty capsid during DNA packaging. Forms a tripartite terminase complex together with TRM1 and TRM2 in the host cytoplasm. Once the complex reaches the host nucleus, it interacts with the capsid portal vertex. This portal forms a ring in which genomic DNA is translocated into the capsid. TRM3 carries an RNase H-like nuclease activity that plays an important role for the cleavage of concatemeric viral DNA into unit length genomes. The polypeptide is Tripartite terminase subunit 3 (Equine herpesvirus 2 (strain 86/87) (EHV-2)).